The primary structure comprises 882 residues: Alanine--tRNA ligase (882 aa).

Zn(2+) is bound by residues His-570, His-574, Cys-672, and His-676.

It belongs to the class-II aminoacyl-tRNA synthetase family. Zn(2+) serves as cofactor.

The protein localises to the cytoplasm. It catalyses the reaction tRNA(Ala) + L-alanine + ATP = L-alanyl-tRNA(Ala) + AMP + diphosphate. Functionally, catalyzes the attachment of alanine to tRNA(Ala) in a two-step reaction: alanine is first activated by ATP to form Ala-AMP and then transferred to the acceptor end of tRNA(Ala). Also edits incorrectly charged Ser-tRNA(Ala) and Gly-tRNA(Ala) via its editing domain. This chain is Alanine--tRNA ligase, found in Xanthomonas axonopodis pv. citri (strain 306).